Consider the following 214-residue polypeptide: Probable transaldolase (214 aa).

The Schiff-base intermediate with substrate role is filled by K83.

It belongs to the transaldolase family. Type 3B subfamily.

Its subcellular location is the cytoplasm. It carries out the reaction D-sedoheptulose 7-phosphate + D-glyceraldehyde 3-phosphate = D-erythrose 4-phosphate + beta-D-fructose 6-phosphate. It functions in the pathway carbohydrate degradation; pentose phosphate pathway; D-glyceraldehyde 3-phosphate and beta-D-fructose 6-phosphate from D-ribose 5-phosphate and D-xylulose 5-phosphate (non-oxidative stage): step 2/3. In terms of biological role, transaldolase is important for the balance of metabolites in the pentose-phosphate pathway. The chain is Probable transaldolase from Geotalea daltonii (strain DSM 22248 / JCM 15807 / FRC-32) (Geobacter daltonii).